Here is an 897-residue protein sequence, read N- to C-terminus: Schlafen family member 13 (897 aa).

The tract at residues 2–355 (EANHCSLGVY…WVEKMMDADP (354 aa)) is n'-domain region. Residues Glu208 and Glu213 contribute to the active site. His284, Cys286, and Cys321 together coordinate Zn(2+). 599-606 (GLPGSGKT) provides a ligand contact to ATP.

This sequence belongs to the Schlafen family. Subgroup III subfamily. Mg(2+) is required as a cofactor.

The protein resides in the cytoplasm. Its function is as follows. Endoribonuclease that cleaves tRNAs and rRNAs. Cleaves tRNAs 11 nucleotides from the 3'-terminus at the acceptor stem. Does not act on tRNA(Sec). Able to restrict HIV-1 virus replication; ability to inhibit HIV-1 replication is dependent on endoribonuclease activity. This is Schlafen family member 13 from Homo sapiens (Human).